Consider the following 129-residue polypeptide: Small ribosomal subunit protein uS11 (129 aa).

This sequence belongs to the universal ribosomal protein uS11 family. In terms of assembly, part of the 30S ribosomal subunit. Interacts with proteins S7 and S18. Binds to IF-3.

Its function is as follows. Located on the platform of the 30S subunit, it bridges several disparate RNA helices of the 16S rRNA. Forms part of the Shine-Dalgarno cleft in the 70S ribosome. The polypeptide is Small ribosomal subunit protein uS11 (Dechloromonas aromatica (strain RCB)).